The sequence spans 238 residues: Keratin-associated protein 5-3 (238 aa).

11 tandem repeats follow at residues 35 to 38 (CCVP), 41 to 44 (CCKP), 47 to 50 (CCVP), 91 to 94 (CCVP), 150 to 153 (CCKP), 160 to 163 (CCKP), 170 to 173 (CCKP), 189 to 192 (CCKP), 199 to 202 (CCKP), 218 to 221 (CCKP), and 228 to 231 (CCVP). The interval 35 to 231 (CCVPVCCCKP…CSSQSSCCVP (197 aa)) is 11 X 4 AA repeats of C-C-X-P.

It belongs to the KRTAP type 5 family. As to quaternary structure, interacts with hair keratins. Restricted to hair root, not detected in any other tissues.

Its function is as follows. In the hair cortex, hair keratin intermediate filaments are embedded in an interfilamentous matrix, consisting of hair keratin-associated protein (KRTAP), which are essential for the formation of a rigid and resistant hair shaft through their extensive disulfide bond cross-linking with abundant cysteine residues of hair keratins. The matrix proteins include the high-sulfur and high-glycine-tyrosine keratins. This chain is Keratin-associated protein 5-3 (KRTAP5-3), found in Homo sapiens (Human).